The following is a 280-amino-acid chain: Ribonuclease Z (280 aa).

The Zn(2+) site is built by histidine 61, histidine 63, aspartate 65, histidine 66, histidine 153, aspartate 176, and histidine 240. Aspartate 65 (proton acceptor) is an active-site residue.

The protein belongs to the RNase Z family. In terms of assembly, homodimer. Zn(2+) is required as a cofactor.

It carries out the reaction Endonucleolytic cleavage of RNA, removing extra 3' nucleotides from tRNA precursor, generating 3' termini of tRNAs. A 3'-hydroxy group is left at the tRNA terminus and a 5'-phosphoryl group is left at the trailer molecule.. Functionally, zinc phosphodiesterase, which displays some tRNA 3'-processing endonuclease activity. Probably involved in tRNA maturation, by removing a 3'-trailer from precursor tRNA. This is Ribonuclease Z from Mycobacterium avium (strain 104).